The primary structure comprises 105 residues: MDKFYNYNSSSHQALLSFKVKPNSKQNLISNFVIINNIPYLKLSIKAIPEQGKANEEIINYLAKEWKLSRSNIEIIKGHTHSLKTILIKNINEDYLNWIINSYIK.

It belongs to the UPF0235 family.

The sequence is that of UPF0235 protein RPR_04990 from Rickettsia peacockii (strain Rustic).